Reading from the N-terminus, the 268-residue chain is Indole-3-glycerol phosphate synthase (268 aa).

Belongs to the TrpC family.

It catalyses the reaction 1-(2-carboxyphenylamino)-1-deoxy-D-ribulose 5-phosphate + H(+) = (1S,2R)-1-C-(indol-3-yl)glycerol 3-phosphate + CO2 + H2O. The protein operates within amino-acid biosynthesis; L-tryptophan biosynthesis; L-tryptophan from chorismate: step 4/5. In Magnetococcus marinus (strain ATCC BAA-1437 / JCM 17883 / MC-1), this protein is Indole-3-glycerol phosphate synthase.